We begin with the raw amino-acid sequence, 304 residues long: MTEKISKCGVVAVLGAPNAGKSTLVNQLVGQKVAITSAKAQTTRARMLGIALHESDDAKTQMILVDTPGIFAPRRRLDRAMVSAAWEGAESADAVLLLVDPVKQRRHELEPLLESLKDRPERKILVLNKVDVAKKEPLLALAQDLSQKVDFAEIYFVSALTGDGVPEMKNALAALMPEGVWHYPEDQVSDASERLLATEITREQLYQQLHEELPYDSAVRPEQYKQRPDGSLEIHQQIVIARESQRPIVLGKGGSRIKAIGEAARKDLSEILGVTVHLFLHVKVDEKWAENKEVFEEIGLDWVR.

One can recognise an Era-type G domain in the interval 7–178 (KCGVVAVLGA…KNALAALMPE (172 aa)). Residues 15–22 (GAPNAGKS) are G1. Position 15–22 (15–22 (GAPNAGKS)) interacts with GTP. Residues 41 to 45 (QTTRA) are G2. Residues 66-69 (DTPG) are G3. Residues 66–70 (DTPGI) and 128–131 (NKVD) each bind GTP. Positions 128-131 (NKVD) are G4. Positions 157 to 159 (VSA) are G5. The KH type-2 domain occupies 209 to 286 (LHEELPYDSA…HLFLHVKVDE (78 aa)).

The protein belongs to the TRAFAC class TrmE-Era-EngA-EngB-Septin-like GTPase superfamily. Era GTPase family. As to quaternary structure, monomer.

The protein resides in the cytoplasm. Its subcellular location is the cell inner membrane. Its function is as follows. An essential GTPase that binds both GDP and GTP, with rapid nucleotide exchange. Plays a role in 16S rRNA processing and 30S ribosomal subunit biogenesis and possibly also in cell cycle regulation and energy metabolism. This Erythrobacter litoralis (strain HTCC2594) protein is GTPase Era.